A 73-amino-acid chain; its full sequence is RNA-binding protein Hfq (73 aa).

The Sm domain maps to 8–68 (DQFLNQIRKE…ISTFAPQKNV (61 aa)).

It belongs to the Hfq family. As to quaternary structure, homohexamer.

Functionally, RNA chaperone that binds small regulatory RNA (sRNAs) and mRNAs to facilitate mRNA translational regulation in response to envelope stress, environmental stress and changes in metabolite concentrations. Also binds with high specificity to tRNAs. The chain is RNA-binding protein Hfq from Bacillus subtilis (strain 168).